The sequence spans 298 residues: Thymidylate synthase (298 aa).

Residues Arg-25 and 159–160 (RR) each bind dUMP. The active-site Nucleophile is Cys-179. DUMP contacts are provided by residues 200 to 203 (RSVD), Asn-211, and 241 to 243 (HLY). Asp-203 lines the (6R)-5,10-methylene-5,6,7,8-tetrahydrofolate pocket. Residue Ala-297 coordinates (6R)-5,10-methylene-5,6,7,8-tetrahydrofolate.

This sequence belongs to the thymidylate synthase family. Bacterial-type ThyA subfamily. In terms of assembly, homodimer.

Its subcellular location is the cytoplasm. The enzyme catalyses dUMP + (6R)-5,10-methylene-5,6,7,8-tetrahydrofolate = 7,8-dihydrofolate + dTMP. Its pathway is pyrimidine metabolism; dTTP biosynthesis. Functionally, catalyzes the reductive methylation of 2'-deoxyuridine-5'-monophosphate (dUMP) to 2'-deoxythymidine-5'-monophosphate (dTMP) while utilizing 5,10-methylenetetrahydrofolate (mTHF) as the methyl donor and reductant in the reaction, yielding dihydrofolate (DHF) as a by-product. This enzymatic reaction provides an intracellular de novo source of dTMP, an essential precursor for DNA biosynthesis. The protein is Thymidylate synthase of Cereibacter sphaeroides (strain ATCC 17023 / DSM 158 / JCM 6121 / CCUG 31486 / LMG 2827 / NBRC 12203 / NCIMB 8253 / ATH 2.4.1.) (Rhodobacter sphaeroides).